The sequence spans 320 residues: ATP-dependent 6-phosphofructokinase (320 aa).

An ATP-binding site is contributed by G12. 22–26 (RGVVR) is an ADP binding site. Residues 73–74 (RF) and 103–106 (GDGS) contribute to the ATP site. D104 contacts Mg(2+). Residue 126–128 (TID) coordinates substrate. Catalysis depends on D128, which acts as the Proton acceptor. R155 is a binding site for ADP. Substrate is bound by residues R163 and 170–172 (MGR). ADP-binding positions include 186 to 188 (GCE), K212, and 214 to 216 (KKH). Substrate is bound by residues E223, R244, and 250–253 (HIQR).

Belongs to the phosphofructokinase type A (PFKA) family. ATP-dependent PFK group I subfamily. Prokaryotic clade 'B1' sub-subfamily. Homotetramer. Mg(2+) is required as a cofactor.

The protein resides in the cytoplasm. It catalyses the reaction beta-D-fructose 6-phosphate + ATP = beta-D-fructose 1,6-bisphosphate + ADP + H(+). Its pathway is carbohydrate degradation; glycolysis; D-glyceraldehyde 3-phosphate and glycerone phosphate from D-glucose: step 3/4. With respect to regulation, allosterically activated by ADP and other diphosphonucleosides, and allosterically inhibited by phosphoenolpyruvate. Functionally, catalyzes the phosphorylation of D-fructose 6-phosphate to fructose 1,6-bisphosphate by ATP, the first committing step of glycolysis. In Aliivibrio fischeri (strain ATCC 700601 / ES114) (Vibrio fischeri), this protein is ATP-dependent 6-phosphofructokinase.